The chain runs to 344 residues: Gibberellin receptor GID1C (344 aa).

N-acetylalanine is present on Ala2. Residues 111-113 carry the Involved in the stabilization of the negatively charged intermediate by the formation of the oxyanion hole motif; it reads HGG. Gibberellin A4 contacts are provided by residues 113-114, Tyr125, and Ser189; that span reads GS. Residues Ser114, Tyr125, Ser189, and Phe236 each contribute to the gibberellin A3 site. Ser189 is a catalytic residue. Residue Asp287 is part of the active site. Gly318 contacts gibberellin A4. Gly318 contributes to the gibberellin A3 binding site.

Belongs to the 'GDXG' lipolytic enzyme family. Interacts with the DELLA proteins GAI, RGA, RGL1, RGL2 and RGL3 in a GA-dependent manner. As to expression, widely expressed.

It localises to the nucleus. Functions as a soluble gibberellin (GA) receptor. GA is an essential hormone that regulates growth and development in plants. Binds with high affinity the biologically active gibberellin GA4, but has no affinity for the biologically inactive GAs. In response to GA, interacts with specific DELLA proteins, known as repressors of GA-induced growth, and targets them for degradation via proteasome. Seems to be required for GA signaling that controls root growth, seed germination and stem elongation. Partially redundant with GID1A and GID1B. This Arabidopsis thaliana (Mouse-ear cress) protein is Gibberellin receptor GID1C (GID1C).